The following is a 240-amino-acid chain: Uridylate kinase (240 aa).

Residue 12-15 (KLSG) participates in ATP binding. The interval 20-25 (GEKGFG) is involved in allosteric activation by GTP. Gly-54 provides a ligand contact to UMP. Positions 55 and 59 each coordinate ATP. UMP is bound by residues Asp-74 and 135–142 (TGSPYFST). Residues Asn-163, Tyr-169, and Asp-172 each coordinate ATP.

Belongs to the UMP kinase family. In terms of assembly, homohexamer.

Its subcellular location is the cytoplasm. The catalysed reaction is UMP + ATP = UDP + ADP. The protein operates within pyrimidine metabolism; CTP biosynthesis via de novo pathway; UDP from UMP (UMPK route): step 1/1. With respect to regulation, allosterically activated by GTP. Inhibited by UTP. Functionally, catalyzes the reversible phosphorylation of UMP to UDP. This chain is Uridylate kinase, found in Limosilactobacillus reuteri (Lactobacillus reuteri).